The sequence spans 559 residues: Thrombospondin-related anonymous protein (559 aa).

Residues 1–25 (MNHLGNVKYLVIVFLIFFDLFLVNG) form the signal peptide. Residues 26-496 (RDVQNNIVDE…KKGESDNKYK (471 aa)) lie on the Extracellular side of the membrane. A VWFA domain is found at 48-234 (DLYLLMDCSG…NVIGPFMKAV (187 aa)). Residues glutamine 77 and glutamine 78 each participate in an isoglutamyl lysine isopeptide (Gln-Lys) (interchain with K-? in Factor 3(A)) cross-link. Asparagine 132 is a glycosylation site (N-linked (GlcNAc...) asparagine). Residues 241-287 (TASCGVWDEWSPCSVTCGKGTRSRKREILHEGCTSEIQEQCEEERCP) enclose the TSP type-1 domain. 3 cysteine pairs are disulfide-bonded: cysteine 244–cysteine 273, cysteine 253–cysteine 281, and cysteine 257–cysteine 286. The segment at 280–496 (QCEEERCPPK…KKGESDNKYK (217 aa)) is disordered. The span at 283–292 (EERCPPKWEP) shows a compositional bias: basic and acidic residues. A Cell attachment site motif is present at residues 307 to 309 (RGD). N-linked (GlcNAc...) asparagine glycosylation occurs at asparagine 310. Over residues 370–400 (KEVPSDVPKNPEDDREENFDIPKKPENKHDN) the composition is skewed to basic and acidic residues. Over residues 431 to 440 (DPQSQDNNGN) the composition is skewed to polar residues. Over residues 444-459 (PNSEDRETRPHGRNNE) the composition is skewed to basic and acidic residues. Residue asparagine 460 is glycosylated (N-linked (GlcNAc...) asparagine). The segment covering 466–495 (KYNDTPKHPEREEHEKPDNNKKKGESDNKY) has biased composition (basic and acidic residues). A helical membrane pass occupies residues 497 to 515 (IAGGIAGGLALLACAGLAY). Residues 516–559 (KFVVPGAATPYAGEPAPFDETLGEEDKDLDEPEQFRLPEENEWN) lie on the Cytoplasmic side of the membrane. The disordered stretch occupies residues 523 to 559 (ATPYAGEPAPFDETLGEEDKDLDEPEQFRLPEENEWN). The span at 536–547 (TLGEEDKDLDEP) shows a compositional bias: acidic residues. The segment covering 548–559 (EQFRLPEENEWN) has biased composition (basic and acidic residues).

Its subcellular location is the cell membrane. The chain is Thrombospondin-related anonymous protein (TRAP) from Plasmodium falciparum.